The chain runs to 1207 residues: DNA-directed RNA polymerase subunit beta' (1207 aa).

Residues Cys60, Cys62, Cys75, and Cys78 each contribute to the Zn(2+) site. The Mg(2+) site is built by Asp449, Asp451, and Asp453. Zn(2+) is bound by residues Cys822, Cys896, Cys903, and Cys906.

This sequence belongs to the RNA polymerase beta' chain family. The RNAP catalytic core consists of 2 alpha, 1 beta, 1 beta' and 1 omega subunit. When a sigma factor is associated with the core the holoenzyme is formed, which can initiate transcription. It depends on Mg(2+) as a cofactor. Zn(2+) serves as cofactor.

It carries out the reaction RNA(n) + a ribonucleoside 5'-triphosphate = RNA(n+1) + diphosphate. DNA-dependent RNA polymerase catalyzes the transcription of DNA into RNA using the four ribonucleoside triphosphates as substrates. This chain is DNA-directed RNA polymerase subunit beta', found in Staphylococcus aureus (strain MRSA252).